The chain runs to 590 residues: Sulfoacetaldehyde acetyltransferase (590 aa).

This sequence belongs to the TPP enzyme family. It depends on Mg(2+) as a cofactor. Thiamine diphosphate serves as cofactor.

The protein localises to the cytoplasm. It carries out the reaction acetyl phosphate + sulfite + H(+) = sulfoacetaldehyde + phosphate. The protein operates within organosulfur degradation; taurine degradation via aerobic pathway; acetyl phosphate and sulfite from taurine: step 2/2. The polypeptide is Sulfoacetaldehyde acetyltransferase (Rhodobacter capsulatus (strain ATCC BAA-309 / NBRC 16581 / SB1003)).